The primary structure comprises 1363 residues: Xanthine dehydrogenase (1363 aa).

A 2Fe-2S ferredoxin-type domain is found at 35–121 (DTIRFYLNGT…GKHVITVEGI (87 aa)). Residues C73, C78, C81, C103, C142, C145, C177, and C179 each contribute to the [2Fe-2S] cluster site. In terms of domain architecture, FAD-binding PCMH-type spans 266–450 (FGNKRKKWYR…SSLRIPTASE (185 aa)). Residues 294–301 (LIGGSTET), F374, 384–388 (SPAGN), D397, and K459 each bind FAD. Mo-molybdopterin contacts are provided by Q798 and F829. Substrate contacts are provided by E833 and R911. R943 is a binding site for Mo-molybdopterin. 2 residues coordinate substrate: F945 and T1041. A1110 provides a ligand contact to Mo-molybdopterin. E1295 serves as the catalytic Proton acceptor.

It belongs to the xanthine dehydrogenase family. Requires FAD as cofactor. Mo-molybdopterin is required as a cofactor. The cofactor is [2Fe-2S] cluster.

It is found in the peroxisome. The enzyme catalyses xanthine + NAD(+) + H2O = urate + NADH + H(+). It catalyses the reaction hypoxanthine + NAD(+) + H2O = xanthine + NADH + H(+). Its function is as follows. Key enzyme in purine degradation. Catalyzes the oxidation of hypoxanthine to xanthine. Catalyzes the oxidation of xanthine to uric acid. In Emericella nidulans (strain FGSC A4 / ATCC 38163 / CBS 112.46 / NRRL 194 / M139) (Aspergillus nidulans), this protein is Xanthine dehydrogenase (hxA).